Here is a 133-residue protein sequence, read N- to C-terminus: ATP synthase epsilon chain, chloroplastic (133 aa).

This sequence belongs to the ATPase epsilon chain family. F-type ATPases have 2 components, CF(1) - the catalytic core - and CF(0) - the membrane proton channel. CF(1) has five subunits: alpha(3), beta(3), gamma(1), delta(1), epsilon(1). CF(0) has three main subunits: a, b and c.

The protein localises to the plastid. It localises to the chloroplast thylakoid membrane. Functionally, produces ATP from ADP in the presence of a proton gradient across the membrane. The sequence is that of ATP synthase epsilon chain, chloroplastic from Solanum lycopersicum (Tomato).